We begin with the raw amino-acid sequence, 1655 residues long: MATPSFGNSSPQLTFTHVANFMNDAAADVSAVDAKQLAQIRQFLKANKTNLIESLNTIRQNVTSSGDHNKLRSTIANLLQINVDNDPFFAQSEDLSHAVEFFMSERSSRLHIVYSLLVNPDIDLETYSFIDNDRFNVVGKLISIISSVIQNYDIITASSLAHDYNNDQDMFTIVSLVQLKKFSDLKFILQILQILNLMILNTKVPVDIVNQWFLQYQNQFVEFCRNINSTDKSIDTSSLQLYKFQNFQDLSYLSETLISRISSLFTITTILILGLNTSIAQFDIQSPLYMDTETFDTVNSALENDVATNIVNEDPIFHPMIHYSWSFILYYRRALQSSESFDDSDITKFALFAESHDVLQKLNTLSEILSFDPVYTTVITVFLEFSLNFIPITASTSRVFAKIISKAPEQFIENFLTNDTFEKKLSIIKAKLPLLNESLIPLINLALIDTEFANFELKDICSFAVTKSSLNDLDYDLIADTITNSSSSSDIIVPDLIELKSDLLVAPPLENENSNCLLSIPKSTKGKILTIKQQQQQQQQQNGQQPPTTSNLIIFLYKFNGWSLVGRILQNLLHSYMEKGTQLDDLQHELMISIIKLVTNVVDPKTSIEKSSEILSYLSNSLDTSASTINGASIIQVIFEIFEISLQRKDYTSIVQCCEFMTMLTPNYLHLVSSYLNKSDLLDKYGKTGLSNMILGSVELSTGDYTFTIQLLKLTKVFIRESLSLKNIHISKRSKIDIINKLILHAIHIFESYYNWKYNNFLQKFEIAFHLTLIFYDVLHDVFTINPHQKDQLIISSSANKLLQLFLTPMDSIDLAPNTLTNILISPLNTTTKILGDKILGNLYSKVMNNSFKLCTLLIAIRGSNRDLKPSNLEKLLFINSSKLVDVYTLPSYVHFKVQIIELLSYLVEAPWNDDYPFLLSFLGEAKSMAFLKEVLSDLSSPVQDWNLLRSLYIFFTTLLESKQDGLSILFLTGQFASNKKINDESSIDKKSSILTVLQKNSLLLDSTPEEVSCKLLETITYVLNTWTNSKIFIKDPKFVNSLLAKLKDSKKLFQKKENLTRDETVSLIKKYKLISRIVEIFALCIYNSTDSNSEILNFLNQEDLFELVHHFFQIDGFNKTFHDELNLKFKEKWPSLELQSFQKIPLSRINENENFGYDIPLLDIVLKADRSWNEPSKSQTNFKEEITDASLNLQYVNYEISTAKAWGALITTFVKRSTVPLNDGFVDLVEHFLKLNIDFGSDKQMFTQIYLERIELSFYILYSFKLSGKLLKEEKIIELMNKIFTIFKSGEIDFIKNIGKSLKNNFYRPLLRSVLVLLELVSSGDRFIELISDQLLEFFELVFSKGVYLILSEILCQINKCSTRGLSTDHTTQIVNLEDNTQDLLLLLSLFKKITNVNPSKNFNVILASSLNEVGTLKVILNLYSSAHLIRINDEPILGQITLTFISELCSIEPIAAKLINSGLYSVLLESPLSVAIQQGDIKPEFSPRLHNIWSNGLLSIVLLLLSQFGIKVLPETCLFVSYFGKQIKSTIYNWGDNKLAVSSSLIKETNQLVLLQKMLNLLNYQELFIQPKNSDDQQEAVELVIGLDSEHDKKRLSAALSKFLTHPKYLNSRIIPTTLEEQQQLEDESSRLEFVKGISRDIKALQDSLFKDV.

The stretch at 35 to 62 (KQLAQIRQFLKANKTNLIESLNTIRQNV) forms a coiled coil. A leucine-zipper region spans residues 250-271 (LSYLSETLISRISSLFTITTIL). Phosphoserine is present on Ser340. Residue Lys406 forms a Glycyl lysine isopeptide (Lys-Gly) (interchain with G-Cter in ubiquitin) linkage.

This sequence belongs to the Nup188 family. Component of the nuclear pore complex (NPC). NPC constitutes the exclusive means of nucleocytoplasmic transport. NPCs allow the passive diffusion of ions and small molecules and the active, nuclear transport receptor-mediated bidirectional transport of macromolecules such as proteins, RNAs, ribonucleoparticles (RNPs), and ribosomal subunits across the nuclear envelope. Due to its 8-fold rotational symmetry, all subunits are present with 8 copies or multiples thereof. Interacts with POM152 and NIC96.

The protein localises to the nucleus. Its subcellular location is the nuclear pore complex. It is found in the nucleus membrane. In terms of biological role, functions as a component of the nuclear pore complex (NPC). NPC components, collectively referred to as nucleoporins (NUPs), can play the role of both NPC structural components and of docking or interaction partners for transiently associated nuclear transport factors. NUP188 probably plays an important role in NPC assembly and organization. This Saccharomyces cerevisiae (strain ATCC 204508 / S288c) (Baker's yeast) protein is Nucleoporin NUP188 (NUP188).